The sequence spans 388 residues: Chorismate synthase (388 aa).

NADP(+)-binding residues include Arg-39 and Arg-45. Residues 95–118 are disordered; it reads EKNEKSRRVSRPRPGHADLVGGMK. FMN is bound by residues 130–132, 251–252, Gly-296, 311–315, and Arg-337; these read RSS, NA, and KPIPT.

This sequence belongs to the chorismate synthase family. As to quaternary structure, homotetramer. The cofactor is FMNH2.

The enzyme catalyses 5-O-(1-carboxyvinyl)-3-phosphoshikimate = chorismate + phosphate. It participates in metabolic intermediate biosynthesis; chorismate biosynthesis; chorismate from D-erythrose 4-phosphate and phosphoenolpyruvate: step 7/7. In terms of biological role, catalyzes the anti-1,4-elimination of the C-3 phosphate and the C-6 proR hydrogen from 5-enolpyruvylshikimate-3-phosphate (EPSP) to yield chorismate, which is the branch point compound that serves as the starting substrate for the three terminal pathways of aromatic amino acid biosynthesis. This reaction introduces a second double bond into the aromatic ring system. The chain is Chorismate synthase from Listeria monocytogenes serovar 1/2a (strain ATCC BAA-679 / EGD-e).